The sequence spans 671 residues: DNA ligase (671 aa).

Residues 31–35 (DAEYD), 80–81 (SL), and glutamate 110 each bind NAD(+). Lysine 112 serves as the catalytic N6-AMP-lysine intermediate. Residues arginine 133, glutamate 167, lysine 283, and lysine 307 each coordinate NAD(+). Residues cysteine 401, cysteine 404, cysteine 419, and cysteine 424 each contribute to the Zn(2+) site. The BRCT domain maps to 587–671 (EEELVFAGKT…YLPDEGGLNE (85 aa)).

It belongs to the NAD-dependent DNA ligase family. LigA subfamily. Mg(2+) is required as a cofactor. It depends on Mn(2+) as a cofactor.

The catalysed reaction is NAD(+) + (deoxyribonucleotide)n-3'-hydroxyl + 5'-phospho-(deoxyribonucleotide)m = (deoxyribonucleotide)n+m + AMP + beta-nicotinamide D-nucleotide.. Functionally, DNA ligase that catalyzes the formation of phosphodiester linkages between 5'-phosphoryl and 3'-hydroxyl groups in double-stranded DNA using NAD as a coenzyme and as the energy source for the reaction. It is essential for DNA replication and repair of damaged DNA. This Listeria innocua serovar 6a (strain ATCC BAA-680 / CLIP 11262) protein is DNA ligase.